Here is a 301-residue protein sequence, read N- to C-terminus: tRNA dimethylallyltransferase 2 (301 aa).

Position 11-18 (11-18 (GATASGKT)) interacts with ATP. 13 to 18 (TASGKT) contacts substrate. Positions 36–39 (DSRQ) are interaction with substrate tRNA.

This sequence belongs to the IPP transferase family. As to quaternary structure, monomer. Mg(2+) is required as a cofactor.

The enzyme catalyses adenosine(37) in tRNA + dimethylallyl diphosphate = N(6)-dimethylallyladenosine(37) in tRNA + diphosphate. In terms of biological role, catalyzes the transfer of a dimethylallyl group onto the adenine at position 37 in tRNAs that read codons beginning with uridine, leading to the formation of N6-(dimethylallyl)adenosine (i(6)A). This chain is tRNA dimethylallyltransferase 2, found in Shewanella sediminis (strain HAW-EB3).